A 116-amino-acid polypeptide reads, in one-letter code: Iron-sulfur cluster insertion protein ErpA (116 aa).

The iron-sulfur cluster site is built by Cys-44, Cys-108, and Cys-110.

The protein belongs to the HesB/IscA family. As to quaternary structure, homodimer. Iron-sulfur cluster serves as cofactor.

In terms of biological role, required for insertion of 4Fe-4S clusters for at least IspG. In Idiomarina loihiensis (strain ATCC BAA-735 / DSM 15497 / L2-TR), this protein is Iron-sulfur cluster insertion protein ErpA.